The sequence spans 66 residues: Beta-toxin Cb2 (66 aa).

An LCN-type CS-alpha/beta domain is found at 1 to 66 (KEGYLVDLHT…VWPLPNKRCK (66 aa)). Disulfide bonds link C12–C65, C16–C41, C25–C46, and C29–C48.

Belongs to the long (4 C-C) scorpion toxin superfamily. Sodium channel inhibitor family. Beta subfamily. Expressed by the venom gland.

It is found in the secreted. Beta toxins bind voltage-independently at site-4 of sodium channels (Nav) and reduces peak current and shifts the voltage of activation toward more negative potentials thereby affecting sodium channel activation and promoting spontaneous and repetitive firing. Has an inhibitory effect on voltage-gated sodium channel hNav1.6/SCN8A, affecting both the activation and inactivation processes. Also reduces the peak current of hNav1.5/SCN5A but does not shift its voltage of activation. This toxin is active against mammals and lethal to mice. The protein is Beta-toxin Cb2 of Centruroides baergi (Scorpion).